The following is a 491-amino-acid chain: Aspartyl/glutamyl-tRNA(Asn/Gln) amidotransferase subunit B (491 aa).

The protein belongs to the GatB/GatE family. GatB subfamily. Heterotrimer of A, B and C subunits.

The catalysed reaction is L-glutamyl-tRNA(Gln) + L-glutamine + ATP + H2O = L-glutaminyl-tRNA(Gln) + L-glutamate + ADP + phosphate + H(+). The enzyme catalyses L-aspartyl-tRNA(Asn) + L-glutamine + ATP + H2O = L-asparaginyl-tRNA(Asn) + L-glutamate + ADP + phosphate + 2 H(+). Allows the formation of correctly charged Asn-tRNA(Asn) or Gln-tRNA(Gln) through the transamidation of misacylated Asp-tRNA(Asn) or Glu-tRNA(Gln) in organisms which lack either or both of asparaginyl-tRNA or glutaminyl-tRNA synthetases. The reaction takes place in the presence of glutamine and ATP through an activated phospho-Asp-tRNA(Asn) or phospho-Glu-tRNA(Gln). This Burkholderia cenocepacia (strain ATCC BAA-245 / DSM 16553 / LMG 16656 / NCTC 13227 / J2315 / CF5610) (Burkholderia cepacia (strain J2315)) protein is Aspartyl/glutamyl-tRNA(Asn/Gln) amidotransferase subunit B.